The primary structure comprises 414 residues: Esterase FrsA (414 aa).

Belongs to the FrsA family.

It carries out the reaction a carboxylic ester + H2O = an alcohol + a carboxylate + H(+). In terms of biological role, catalyzes the hydrolysis of esters. This Escherichia coli O6:K15:H31 (strain 536 / UPEC) protein is Esterase FrsA.